The sequence spans 244 residues: Ribosomal RNA small subunit methyltransferase NEP1 (244 aa).

A disordered region spans residues 1–33; sequence MSAASGGFQPRERRFSVQEQDWETTPPKKLRLG. Phosphoserine occurs at positions 5 and 16. S-adenosyl-L-methionine contacts are provided by residues Thr-176, Gly-201, Gly-206, and 219 to 224; that span reads ISNYPL.

Belongs to the class IV-like SAM-binding methyltransferase superfamily. RNA methyltransferase NEP1 family. In terms of assembly, homodimer. Part of the small subunit (SSU) processome, composed of more than 70 proteins and the RNA chaperone small nucleolar RNA (snoRNA) U3.

The protein resides in the nucleus. The protein localises to the nucleolus. It carries out the reaction pseudouridine(1248) in human 18S rRNA + S-adenosyl-L-methionine = N(1)-methylpseudouridine(1248) in human 18S rRNA + S-adenosyl-L-homocysteine + H(+). In terms of biological role, S-adenosyl-L-methionine-dependent pseudouridine N(1)-methyltransferase that methylates pseudouridine at position in 18S rRNA. Involved the biosynthesis of the hypermodified N1-methyl-N3-(3-amino-3-carboxypropyl) pseudouridine (m1acp3-Psi) conserved in eukaryotic 18S rRNA. Is not able to methylate uridine at this position. Also has an essential role in 40S ribosomal subunit biogenesis independent on its methyltransferase activity, facilitating the incorporation of ribosomal protein S19 during the formation of pre-ribosomes. Part of the small subunit (SSU) processome, first precursor of the small eukaryotic ribosomal subunit. During the assembly of the SSU processome in the nucleolus, many ribosome biogenesis factors, an RNA chaperone and ribosomal proteins associate with the nascent pre-rRNA and work in concert to generate RNA folding, modifications, rearrangements and cleavage as well as targeted degradation of pre-ribosomal RNA by the RNA exosome. The polypeptide is Ribosomal RNA small subunit methyltransferase NEP1 (Mus musculus (Mouse)).